Consider the following 192-residue polypeptide: uncharacterized protein (192 aa).

The 132-residue stretch at 29–160 (QRQAAVLVPI…PLDIERKQQR (132 aa)) folds into the Nudix hydrolase domain. Positions 67–89 (GAADKTDRSIIETALREAQEEVA) match the Nudix box motif. Positions 83 and 87 each coordinate Mg(2+).

The protein belongs to the Nudix hydrolase family. PCD1 subfamily. Mn(2+) serves as cofactor. The cofactor is Mg(2+).

Its function is as follows. Probably mediates the hydrolysis of some nucleoside diphosphate derivatives. This is an uncharacterized protein from Pectobacterium atrosepticum (strain SCRI 1043 / ATCC BAA-672) (Erwinia carotovora subsp. atroseptica).